The chain runs to 452 residues: MKDLNHIKHFYFIGVGGIGMSALARYFKAKGNFVAGYDRTSTELTRMLEDENIEVNYEDDITIIPETILNNQENTLIVYTPAVPKDHKQFEFLKKKNFEVVKRAELLGMVTDQKYCLAVAGTHGKTTTTAILGHLLKETGAKVTAFLGGISEDIQSNLIMQGDKVVVVEADEFDRSFLKLSPNLAAITSMDADHLDIYGDKSELEKSFREFAAKVPEDGKLFVKNGLPVNGSSVGINDNSDFSAQNIRIEEGSYVFDLKTPSETIKNLKFNLPGNHNLLNAITALAMAIEYGTSIHDLTRALYSFKGVKRRFSYKIKKDHLVLIDDYAHHPTEISAVHQAVREMYPNKKVLAVFQPHLFSRTRDFAEDFASSLSDFDKVFLLDIYPARELPIEGISSAWLLDKISNTNKALIQKKNLSEMIKTEEAEVVVMMGAGDIGEEVEKVKKALLHEA.

Position 121–127 (121–127 (GTHGKTT)) interacts with ATP.

The protein belongs to the MurCDEF family.

It localises to the cytoplasm. It carries out the reaction UDP-N-acetyl-alpha-D-muramate + L-alanine + ATP = UDP-N-acetyl-alpha-D-muramoyl-L-alanine + ADP + phosphate + H(+). Its pathway is cell wall biogenesis; peptidoglycan biosynthesis. Functionally, cell wall formation. The sequence is that of UDP-N-acetylmuramate--L-alanine ligase from Christiangramia forsetii (strain DSM 17595 / CGMCC 1.15422 / KT0803) (Gramella forsetii).